The chain runs to 942 residues: MORC family CW-type zinc finger protein 3 (942 aa).

Glycyl lysine isopeptide (Lys-Gly) (interchain with G-Cter in SUMO2) cross-links involve residues Lys191, Lys205, Lys280, and Lys293. The interval 326–353 is nuclear matrix binding; the sequence is AYEKVGCQLKANNMGVGVVGIIECNFLK. The CW-type zinc finger occupies 404–454; it reads KRPDQTWVQCDACLKWRKLPDGIDQLPEKWYCSNNPDPQFRNCEVPEEPED. The Zn(2+) site is built by Cys413, Cys416, Cys435, and Cys446. Residues 503-594 are RNA binding; sequence SFSPVKESVP…ENSTPKPAVD (92 aa). 2 positions are modified to phosphoserine: Ser517 and Ser543. Residue Lys558 forms a Glycyl lysine isopeptide (Lys-Gly) (interchain with G-Cter in SUMO2) linkage. Residue Ser563 is modified to Phosphoserine. Lys604 is covalently cross-linked (Glycyl lysine isopeptide (Lys-Gly) (interchain with G-Cter in SUMO1); alternate). Residue Lys604 forms a Glycyl lysine isopeptide (Lys-Gly) (interchain with G-Cter in SUMO2); alternate linkage. Residues 623–654 are disordered; the sequence is PKPCVQASSTSTSTSRSDPGITVSTQTDAPGL. Low complexity predominate over residues 630 to 639; that stretch reads SSTSTSTSRS. Residues Lys657, Lys658, and Lys743 each participate in a glycyl lysine isopeptide (Lys-Gly) (interchain with G-Cter in SUMO1); alternate cross-link. Glycyl lysine isopeptide (Lys-Gly) (interchain with G-Cter in SUMO2); alternate cross-links involve residues Lys657, Lys658, and Lys743. Positions 696–874 form a coiled coil; it reads SHQLQELRSE…KSTGQQAAAD (179 aa). Ser768 bears the Phosphoserine mark. Residue Lys797 forms a Glycyl lysine isopeptide (Lys-Gly) (interchain with G-Cter in SUMO1); alternate linkage. Residue Lys797 forms a Glycyl lysine isopeptide (Lys-Gly) (interchain with G-Cter in SUMO2); alternate linkage.

As to quaternary structure, homodimer. The sumoylated form interacts with PML (via SUMO-interacting motif). Interacts with TP53. Post-translationally, sumoylation is involved in interaction with PML and localization to PML nuclear bodies.

The protein localises to the nucleus. It is found in the nucleoplasm. The protein resides in the nucleus matrix. It localises to the PML body. Its subcellular location is the chromosome. Its activity is regulated as follows. Dimerization of the ATPase domain is strictly required for the catalytic activity and binding to double-stranded DNA. Disrupting the interface between ATPase and the CW domains releases autoinhibition since the CW domain sterically impedes binding of the ATPase domain to DNA. In terms of biological role, nuclear matrix protein which forms MORC3-NBs (nuclear bodies) via an ATP-dependent mechanism and plays a role in innate immunity by restricting different viruses through modulation of the IFN response. Mechanistically, possesses a primary antiviral function through a MORC3-regulated element that activates IFNB1, and this function is guarded by a secondary IFN-repressing function. Sumoylated MORC3-NBs associates with PML-NBs and recruits TP53 and SP100, thus regulating TP53 activity. Binds RNA in vitro. Histone methylation reader which binds to non-methylated (H3K4me0), monomethylated (H3K4me1), dimethylated (H3K4me2) and trimethylated (H3K4me3) 'Lys-4' on histone H3. The order of binding preference is H3K4me3 &gt; H3K4me2 &gt; H3K4me1 &gt; H3K4me0. In Mus musculus (Mouse), this protein is MORC family CW-type zinc finger protein 3.